The chain runs to 421 residues: O-glycosyltransferase braB (421 aa).

The tract at residues 1-26 is disordered; the sequence is MVPSVMEGAPQLGITSTDTSSAGVPP. Over residues 13–22 the composition is skewed to polar residues; sequence GITSTDTSSA.

It belongs to the afumC glycosyltransferase family.

The protein operates within secondary metabolite biosynthesis. Functionally, O-glycosyltransferase; part of the gene cluster that mediates the biosynthesis of the brasilane terpene glycosides brasilane D and E. The biosynthesis starts with the activity of the terpene cyclase braA that converts farnesyl pyrophosphate into the sesquiterpene alcohol trichobrasilenol. Subsequently, trichobrasilenol is glycosylated by the O-glycosyltransferase braB putatively using UDP-GlcNAc as sugar donor to yield brasilane A. The latter then undergoes two rounds of oxidation performed by the cytochrome P450 monooxygenase braC. In the first round braC hydroxylates C-12 forming brasilane D, which serves as substrate in the second round to establish the epoxide at the bond between C-5 and C-10 and oxidize the alcohol at C-12 to an aldehyde leading to the final product brasilane E. BraB is also able to glycosylate geraniol, linalool, perillyl alcohol, 3,4-dichlorophenol and, to a lesser extend, benzyl alcohol. In Annulohypoxylon truncatum (Hypoxylon truncatum), this protein is O-glycosyltransferase braB.